The following is a 240-amino-acid chain: Ribonuclease 3 (240 aa).

Residues 9-141 (VEELQKRLGV…LLAALYLDQG (133 aa)) enclose the RNase III domain. Glutamate 54 is a binding site for Mg(2+). Residue aspartate 58 is part of the active site. The Mg(2+) site is built by aspartate 127 and glutamate 130. Residue glutamate 130 is part of the active site. The region spanning 168–237 (DYKTALQEIV…ARKAYEKLVA (70 aa)) is the DRBM domain.

This sequence belongs to the ribonuclease III family. Homodimer. It depends on Mg(2+) as a cofactor.

Its subcellular location is the cytoplasm. It carries out the reaction Endonucleolytic cleavage to 5'-phosphomonoester.. Digests double-stranded RNA. Involved in the processing of primary rRNA transcript to yield the immediate precursors to the large and small rRNAs (23S and 16S). Processes some mRNAs, and tRNAs when they are encoded in the rRNA operon. Processes pre-crRNA and tracrRNA of type II CRISPR loci if present in the organism. This chain is Ribonuclease 3, found in Thermotoga neapolitana (strain ATCC 49049 / DSM 4359 / NBRC 107923 / NS-E).